Here is a 456-residue protein sequence, read N- to C-terminus: Tyrosinase-like protein 2 (456 aa).

The first 22 residues, 1 to 22 (MNTMALFGKVILLQFLIGVGFC), serve as a signal peptide directing secretion. The Cu cation site is built by H145, H154, H163, H295, H299, and H322.

Cu(2+) serves as cofactor. Prismatic layer of shell (at protein level).

Its subcellular location is the secreted. The polypeptide is Tyrosinase-like protein 2 (Margaritifera margaritifera (Freshwater pearl mussel)).